Consider the following 205-residue polypeptide: Probable ADP-ribosylation factor At2g15310 (205 aa).

Residue G2 is the site of N-myristoyl glycine attachment. Residues 24 to 31 (GLDGSGKT), 67 to 71 (DIGGQ), and 126 to 129 (NKQD) each bind GTP.

The protein belongs to the small GTPase superfamily. Arf family.

The protein localises to the golgi apparatus. In terms of biological role, GTP-binding protein involved in protein trafficking; may modulate vesicle budding and uncoating within the Golgi apparatus. This is Probable ADP-ribosylation factor At2g15310 from Arabidopsis thaliana (Mouse-ear cress).